We begin with the raw amino-acid sequence, 641 residues long: Probable ATP-dependent helicase YpvA (641 aa).

Residues 29–303 form the Helicase ATP-binding domain; sequence YDILPEKGFD…EFAELIEDAL (275 aa). 64 to 71 lines the ATP pocket; sequence AGVGTGKT. [4Fe-4S] cluster contacts are provided by cysteine 133, cysteine 197, cysteine 200, and cysteine 206. A DEGH box motif is present at residues 257-260; the sequence is DEGH.

Belongs to the helicase family. DinG subfamily. [4Fe-4S] cluster serves as cofactor.

It carries out the reaction Couples ATP hydrolysis with the unwinding of duplex DNA at the replication fork by translocating in the 5'-3' direction. This creates two antiparallel DNA single strands (ssDNA). The leading ssDNA polymer is the template for DNA polymerase III holoenzyme which synthesizes a continuous strand.. It catalyses the reaction ATP + H2O = ADP + phosphate + H(+). Might be a 5'-3' DNA helicase. This chain is Probable ATP-dependent helicase YpvA (ypvA), found in Bacillus subtilis (strain 168).